A 160-amino-acid chain; its full sequence is Epithelial membrane protein 1 (160 aa).

A helical transmembrane segment spans residues 1–21 (MLVLLAGLFVVHIATAIMLFV). N-linked (GlcNAc...) asparagine glycosylation occurs at Asn-43. The next 3 helical transmembrane spans lie at 67–87 (FMIL…FQLF), 95–115 (FFLS…GVSI), and 137–157 (FILT…YMVL).

It belongs to the PMP-22/EMP/MP20 family. As to expression, most prominently found in the gastrointestinal tract, skin, lung, and brain but not in liver.

Its subcellular location is the membrane. This is Epithelial membrane protein 1 (Emp1) from Rattus norvegicus (Rat).